We begin with the raw amino-acid sequence, 86 residues long: Small ribosomal subunit protein uS17 (86 aa).

This sequence belongs to the universal ribosomal protein uS17 family. As to quaternary structure, part of the 30S ribosomal subunit.

In terms of biological role, one of the primary rRNA binding proteins, it binds specifically to the 5'-end of 16S ribosomal RNA. The sequence is that of Small ribosomal subunit protein uS17 from Exiguobacterium sp. (strain ATCC BAA-1283 / AT1b).